The sequence spans 60 residues: Large ribosomal subunit protein uL30 (60 aa).

Belongs to the universal ribosomal protein uL30 family. As to quaternary structure, part of the 50S ribosomal subunit.

This chain is Large ribosomal subunit protein uL30, found in Leifsonia xyli subsp. xyli (strain CTCB07).